The sequence spans 208 residues: ATP-dependent Clp protease proteolytic subunit (208 aa).

Serine 107 acts as the Nucleophile in catalysis. The active site involves histidine 132.

Belongs to the peptidase S14 family. Fourteen ClpP subunits assemble into 2 heptameric rings which stack back to back to give a disk-like structure with a central cavity, resembling the structure of eukaryotic proteasomes.

It is found in the cytoplasm. It catalyses the reaction Hydrolysis of proteins to small peptides in the presence of ATP and magnesium. alpha-casein is the usual test substrate. In the absence of ATP, only oligopeptides shorter than five residues are hydrolyzed (such as succinyl-Leu-Tyr-|-NHMec, and Leu-Tyr-Leu-|-Tyr-Trp, in which cleavage of the -Tyr-|-Leu- and -Tyr-|-Trp bonds also occurs).. In terms of biological role, cleaves peptides in various proteins in a process that requires ATP hydrolysis. Has a chymotrypsin-like activity. Plays a major role in the degradation of misfolded proteins. The sequence is that of ATP-dependent Clp protease proteolytic subunit from Methylobacterium radiotolerans (strain ATCC 27329 / DSM 1819 / JCM 2831 / NBRC 15690 / NCIMB 10815 / 0-1).